A 206-amino-acid chain; its full sequence is Protein GrpE (206 aa).

The disordered stretch occupies residues 1–36 (MTDSNGPKDNNQDQAQAAADPVVSKPYIMPDDPEDG).

This sequence belongs to the GrpE family. In terms of assembly, homodimer.

It is found in the cytoplasm. Its function is as follows. Participates actively in the response to hyperosmotic and heat shock by preventing the aggregation of stress-denatured proteins, in association with DnaK and GrpE. It is the nucleotide exchange factor for DnaK and may function as a thermosensor. Unfolded proteins bind initially to DnaJ; upon interaction with the DnaJ-bound protein, DnaK hydrolyzes its bound ATP, resulting in the formation of a stable complex. GrpE releases ADP from DnaK; ATP binding to DnaK triggers the release of the substrate protein, thus completing the reaction cycle. Several rounds of ATP-dependent interactions between DnaJ, DnaK and GrpE are required for fully efficient folding. The protein is Protein GrpE of Rhodopseudomonas palustris (strain HaA2).